The primary structure comprises 186 residues: Dynactin subunit 3 (186 aa).

Residue Ala2 is modified to N-acetylalanine. Positions 135-157 (QQQDQCVEITEESKALLEEYNKT) form a coiled coil.

Belongs to the dynactin subunit 3 family. Subunit of dynactin, a multiprotein complex part of a tripartite complex with dynein and a adapter, such as BICDL1, BICD2 or HOOK3. The dynactin complex is built around ACTR1A/ACTB filament and consists of an actin-related filament composed of a shoulder domain, a pointed end and a barbed end. Its length is defined by its flexible shoulder domain. The soulder is composed of 2 DCTN1 subunits, 4 DCTN2 and 2 DCTN3. The 4 DCNT2 (via N-terminus) bind the ACTR1A filament and act as molecular rulers to determine the length. The pointed end is important for binding dynein-dynactin cargo adapters. Consists of 4 subunits: ACTR10, DCNT4, DCTN5 and DCTN6. The barbed end is composed of a CAPZA1:CAPZB heterodimers, which binds ACTR1A/ACTB filament and dynactin and stabilizes dynactin. Ubiquitously expressed. Highly expressed in muscle and pancreas and detected at lower levels in brain.

The protein resides in the cytoplasm. It localises to the cytoskeleton. The protein localises to the microtubule organizing center. It is found in the centrosome. Its subcellular location is the chromosome. The protein resides in the centromere. It localises to the kinetochore. The protein localises to the spindle. It is found in the cleavage furrow. Its subcellular location is the midbody. Its function is as follows. Part of the dynactin complex that activates the molecular motor dynein for ultra-processive transport along microtubules. Together with dynein may be involved in spindle assembly and cytokinesis. This chain is Dynactin subunit 3, found in Homo sapiens (Human).